A 464-amino-acid chain; its full sequence is Glutamate--tRNA ligase (464 aa).

The 'HIGH' region motif lies at 8–18 (PSPTGYMHLGN). Cysteine 96, cysteine 98, cysteine 123, and histidine 125 together coordinate Zn(2+). Residues 240 to 244 (KLSKR) carry the 'KMSKS' region motif. Position 243 (lysine 243) interacts with ATP.

It belongs to the class-I aminoacyl-tRNA synthetase family. Glutamate--tRNA ligase type 1 subfamily. Monomer. Zn(2+) is required as a cofactor.

It is found in the cytoplasm. The catalysed reaction is tRNA(Glu) + L-glutamate + ATP = L-glutamyl-tRNA(Glu) + AMP + diphosphate. Functionally, catalyzes the attachment of glutamate to tRNA(Glu) in a two-step reaction: glutamate is first activated by ATP to form Glu-AMP and then transferred to the acceptor end of tRNA(Glu). In Hydrogenobaculum sp. (strain Y04AAS1), this protein is Glutamate--tRNA ligase.